Reading from the N-terminus, the 392-residue chain is L-rhamnonate dehydratase (392 aa).

Substrate-binding residues include histidine 22 and arginine 48. Residues aspartate 214, glutamate 240, and glutamate 268 each contribute to the Mg(2+) site. Histidine 318 acts as the Proton acceptor in catalysis. Glutamate 338 is a substrate binding site.

Belongs to the mandelate racemase/muconate lactonizing enzyme family. RhamD subfamily. Homooctamer; tetramer of dimers. The cofactor is Mg(2+).

It catalyses the reaction L-rhamnonate = 2-dehydro-3-deoxy-L-rhamnonate + H2O. In terms of biological role, catalyzes the dehydration of L-rhamnonate to 2-keto-3-deoxy-L-rhamnonate (KDR). The sequence is that of L-rhamnonate dehydratase from Burkholderia cenocepacia (strain HI2424).